Reading from the N-terminus, the 510-residue chain is Protein phosphatase 1H (510 aa).

Residues 73–503 (STGYAEVINA…DDISVYVIPL (431 aa)) enclose the PPM-type phosphatase domain. 2 disordered regions span residues 105–128 (VQST…EGLQ) and 188–225 (LGEE…PTRF).

This sequence belongs to the PP2C family.

The protein localises to the nucleus. It is found in the cytoplasm. The enzyme catalyses O-phospho-L-seryl-[protein] + H2O = L-seryl-[protein] + phosphate. It catalyses the reaction O-phospho-L-threonyl-[protein] + H2O = L-threonyl-[protein] + phosphate. In Xenopus tropicalis (Western clawed frog), this protein is Protein phosphatase 1H (ppm1h).